The chain runs to 161 residues: MKYDTSELCDIYHEEVNVVEPLFSNFGGRSSFGGQIITVKCFEDNGLLYDLLEENGRGRVLVIDGGGSVRRALVNAELGRLAVQNEWEGIVVYGAVRQVDDLEELDIGIQAMAAIPVGADSDGIGESDIRVNFGGVTFFSGDHLYADNTGIILAEEPLDIE.

This sequence belongs to the RraA family. As to quaternary structure, homotrimer. Binds to both RNA-binding sites in the C-terminal region of Rne and to RhlB.

The protein localises to the cytoplasm. Globally modulates RNA abundance by binding to RNase E (Rne) and regulating its endonucleolytic activity. Can modulate Rne action in a substrate-dependent manner by altering the composition of the degradosome. Modulates RNA-binding and helicase activities of the degradosome. In Edwardsiella ictaluri (strain 93-146), this protein is Regulator of ribonuclease activity A.